A 399-amino-acid polypeptide reads, in one-letter code: Probable tRNA sulfurtransferase (399 aa).

One can recognise a THUMP domain in the interval 60 to 165; sequence YAVMERLKRV…TEGTYISCET (106 aa). Residues 183–184, 208–209, R265, G287, and Q296 each bind ATP; these read LL and HF.

The protein belongs to the ThiI family.

It localises to the cytoplasm. The catalysed reaction is [ThiI sulfur-carrier protein]-S-sulfanyl-L-cysteine + a uridine in tRNA + 2 reduced [2Fe-2S]-[ferredoxin] + ATP + H(+) = [ThiI sulfur-carrier protein]-L-cysteine + a 4-thiouridine in tRNA + 2 oxidized [2Fe-2S]-[ferredoxin] + AMP + diphosphate. It carries out the reaction [ThiS sulfur-carrier protein]-C-terminal Gly-Gly-AMP + S-sulfanyl-L-cysteinyl-[cysteine desulfurase] + AH2 = [ThiS sulfur-carrier protein]-C-terminal-Gly-aminoethanethioate + L-cysteinyl-[cysteine desulfurase] + A + AMP + 2 H(+). It participates in cofactor biosynthesis; thiamine diphosphate biosynthesis. Catalyzes the ATP-dependent transfer of a sulfur to tRNA to produce 4-thiouridine in position 8 of tRNAs, which functions as a near-UV photosensor. Also catalyzes the transfer of sulfur to the sulfur carrier protein ThiS, forming ThiS-thiocarboxylate. This is a step in the synthesis of thiazole, in the thiamine biosynthesis pathway. The sulfur is donated as persulfide by IscS. This Brevibacillus brevis (strain 47 / JCM 6285 / NBRC 100599) protein is Probable tRNA sulfurtransferase.